A 119-amino-acid chain; its full sequence is Large ribosomal subunit protein bL20 (119 aa).

It belongs to the bacterial ribosomal protein bL20 family.

Its function is as follows. Binds directly to 23S ribosomal RNA and is necessary for the in vitro assembly process of the 50S ribosomal subunit. It is not involved in the protein synthesizing functions of that subunit. This is Large ribosomal subunit protein bL20 from Dehalococcoides mccartyi (strain ATCC BAA-2266 / KCTC 15142 / 195) (Dehalococcoides ethenogenes (strain 195)).